The following is a 291-amino-acid chain: Phosphatidylglycerol--prolipoprotein diacylglyceryl transferase (291 aa).

The next 7 membrane-spanning stretches (helical) occupy residues 21–41 (VALH…MWLA), 60–80 (LLYA…VLFY), 96–116 (WDGG…MIIF), 130–150 (FIAP…FING), 198–218 (SQLY…NLFI), 225–245 (GAVS…VEFF), and 260–280 (ISMG…MMVW). Arg143 is a binding site for a 1,2-diacyl-sn-glycero-3-phospho-(1'-sn-glycerol).

This sequence belongs to the Lgt family.

Its subcellular location is the cell inner membrane. The enzyme catalyses L-cysteinyl-[prolipoprotein] + a 1,2-diacyl-sn-glycero-3-phospho-(1'-sn-glycerol) = an S-1,2-diacyl-sn-glyceryl-L-cysteinyl-[prolipoprotein] + sn-glycerol 1-phosphate + H(+). The protein operates within protein modification; lipoprotein biosynthesis (diacylglyceryl transfer). Its function is as follows. Catalyzes the transfer of the diacylglyceryl group from phosphatidylglycerol to the sulfhydryl group of the N-terminal cysteine of a prolipoprotein, the first step in the formation of mature lipoproteins. This chain is Phosphatidylglycerol--prolipoprotein diacylglyceryl transferase, found in Salmonella agona (strain SL483).